The primary structure comprises 269 residues: Regulatory protein RecX (269 aa).

This sequence belongs to the RecX family.

Its subcellular location is the cytoplasm. In terms of biological role, modulates RecA activity. The polypeptide is Regulatory protein RecX (Geobacillus thermodenitrificans (strain NG80-2)).